A 421-amino-acid polypeptide reads, in one-letter code: Gamma-glutamyl phosphate reductase (421 aa).

Belongs to the gamma-glutamyl phosphate reductase family.

Its subcellular location is the cytoplasm. It carries out the reaction L-glutamate 5-semialdehyde + phosphate + NADP(+) = L-glutamyl 5-phosphate + NADPH + H(+). It functions in the pathway amino-acid biosynthesis; L-proline biosynthesis; L-glutamate 5-semialdehyde from L-glutamate: step 2/2. Functionally, catalyzes the NADPH-dependent reduction of L-glutamate 5-phosphate into L-glutamate 5-semialdehyde and phosphate. The product spontaneously undergoes cyclization to form 1-pyrroline-5-carboxylate. The chain is Gamma-glutamyl phosphate reductase from Erythrobacter litoralis (strain HTCC2594).